The chain runs to 236 residues: Leucyl/phenylalanyl-tRNA--protein transferase (236 aa).

Belongs to the L/F-transferase family.

Its subcellular location is the cytoplasm. It catalyses the reaction N-terminal L-lysyl-[protein] + L-leucyl-tRNA(Leu) = N-terminal L-leucyl-L-lysyl-[protein] + tRNA(Leu) + H(+). The enzyme catalyses N-terminal L-arginyl-[protein] + L-leucyl-tRNA(Leu) = N-terminal L-leucyl-L-arginyl-[protein] + tRNA(Leu) + H(+). It carries out the reaction L-phenylalanyl-tRNA(Phe) + an N-terminal L-alpha-aminoacyl-[protein] = an N-terminal L-phenylalanyl-L-alpha-aminoacyl-[protein] + tRNA(Phe). In terms of biological role, functions in the N-end rule pathway of protein degradation where it conjugates Leu, Phe and, less efficiently, Met from aminoacyl-tRNAs to the N-termini of proteins containing an N-terminal arginine or lysine. The sequence is that of Leucyl/phenylalanyl-tRNA--protein transferase from Idiomarina loihiensis (strain ATCC BAA-735 / DSM 15497 / L2-TR).